The sequence spans 107 residues: Replication restart protein PriB (107 aa).

The region spanning 1-97 (MNTLELSARV…LHLQQARRIA (97 aa)) is the SSB domain.

Belongs to the PriB family. Homodimer. Interacts with PriA and DnaT. Component of the replication restart primosome. Primosome assembly occurs via a 'hand-off' mechanism. PriA binds to replication forks, subsequently PriB then DnaT bind; DnaT then displaces ssDNA to generate the helicase loading substrate.

Its function is as follows. Involved in the restart of stalled replication forks, which reloads the replicative helicase on sites other than the origin of replication; the PriA-PriB pathway is the major replication restart pathway. During primosome assembly it facilitates complex formation between PriA and DnaT on DNA; stabilizes PriA on DNA. Stimulates the DNA unwinding activity of PriA helicase. This chain is Replication restart protein PriB, found in Bordetella parapertussis (strain 12822 / ATCC BAA-587 / NCTC 13253).